The primary structure comprises 310 residues: Pantothenate kinase (310 aa).

95 to 102 (GSVAVGKS) provides a ligand contact to ATP.

Belongs to the prokaryotic pantothenate kinase family.

It localises to the cytoplasm. It catalyses the reaction (R)-pantothenate + ATP = (R)-4'-phosphopantothenate + ADP + H(+). It participates in cofactor biosynthesis; coenzyme A biosynthesis; CoA from (R)-pantothenate: step 1/5. The chain is Pantothenate kinase from Rhodococcus opacus (strain B4).